The sequence spans 257 residues: Global transcriptional regulator CodY (257 aa).

The interval 1–155 is GAF domain; it reads MSLLSKTREL…AATVIGMEIL (155 aa). The segment at residues 203–222 is a DNA-binding region (H-T-H motif); the sequence is ASKVADRVGITRSVIVNALR.

It belongs to the CodY family.

The protein resides in the cytoplasm. In terms of biological role, DNA-binding global transcriptional regulator which is involved in the adaptive response to starvation and acts by directly or indirectly controlling the expression of numerous genes in response to nutrient availability. During rapid exponential growth, CodY is highly active and represses genes whose products allow adaptation to nutrient depletion. The sequence is that of Global transcriptional regulator CodY from Staphylococcus haemolyticus (strain JCSC1435).